Consider the following 197-residue polypeptide: Phosphoheptose isomerase (197 aa).

The 161-residue stretch at 37 to 197 (MLQCLMNDGK…CIDSVLLEGM (161 aa)) folds into the SIS domain. 52-54 (NGG) lines the substrate pocket. Zn(2+) contacts are provided by H61 and E65. Substrate-binding positions include E65, 94–95 (ND), 120–122 (STS), S125, and Q175. Q175 and H183 together coordinate Zn(2+).

It belongs to the SIS family. GmhA subfamily. In terms of assembly, homotetramer. Zn(2+) is required as a cofactor.

The protein localises to the cytoplasm. The enzyme catalyses 2 D-sedoheptulose 7-phosphate = D-glycero-alpha-D-manno-heptose 7-phosphate + D-glycero-beta-D-manno-heptose 7-phosphate. The protein operates within carbohydrate biosynthesis; D-glycero-D-manno-heptose 7-phosphate biosynthesis; D-glycero-alpha-D-manno-heptose 7-phosphate and D-glycero-beta-D-manno-heptose 7-phosphate from sedoheptulose 7-phosphate: step 1/1. In terms of biological role, catalyzes the isomerization of sedoheptulose 7-phosphate in D-glycero-D-manno-heptose 7-phosphate. In Neisseria gonorrhoeae (strain ATCC 700825 / FA 1090), this protein is Phosphoheptose isomerase.